We begin with the raw amino-acid sequence, 306 residues long: Palmitoyl-protein thioesterase ABHD10, mitochondrial (306 aa).

The transit peptide at 1-52 directs the protein to the mitochondrion; it reads MAGVGLAAVPAWVPCRRWGLAAVTFGFHHGLSTLLARKTERAPQWLRACRHK. Residues 78 to 177 form the AB hydrolase-1 domain; sequence IIFIPGYISN…KVVALVGVAT (100 aa). Active-site charge relay system residues include serine 152, aspartate 249, and histidine 279.

This sequence belongs to the AB hydrolase superfamily.

It localises to the mitochondrion. It catalyses the reaction S-hexadecanoyl-L-cysteinyl-[protein] + H2O = L-cysteinyl-[protein] + hexadecanoate + H(+). The catalysed reaction is mycophenolic acid O-acyl-beta-D-glucuronide + H2O = mycophenolate + D-glucuronate + H(+). Its activity is regulated as follows. Inhibited by palmostatin-B. Functionally, acts as an acyl-protein thioesterase that hydrolyzes fatty acids from acylated residues in proteins. Regulates the mitochondrial S-depalmitoylation of the nucleophilic active site residue of peroxiredoxin-5/PRDX5, a key antioxidant protein, therefore modulating mitochondrial antioxidant ability. Also catalyzes the deglucuronidation of mycophenolic acid acyl-glucuronide, an active metabolite of the immunosuppressant drug mycophenolate. In Bos taurus (Bovine), this protein is Palmitoyl-protein thioesterase ABHD10, mitochondrial (ABHD10).